The following is a 219-amino-acid chain: Proteasome subunit beta type-9 (219 aa).

The propeptide at 1–20 (MLQAGAPTAGSFRTGEVHTG) is removed in mature form. Thr-21 functions as the Nucleophile in the catalytic mechanism. Residues Lys-53 and Lys-109 each carry the N6-acetyllysine modification.

It belongs to the peptidase T1B family. The 26S proteasome consists of a 20S proteasome core and two 19S regulatory subunits. The 20S proteasome core is composed of 28 subunits that are arranged in four stacked rings, resulting in a barrel-shaped structure. The two end rings are each formed by seven alpha subunits, and the two central rings are each formed by seven beta subunits. The catalytic chamber with the active sites is on the inside of the barrel. Component of the immunoproteasome, where it displaces the equivalent housekeeping subunit PSMB6. Component of the spermatoproteasome, a form of the proteasome specifically found in testis. Interacts with NCOA2 and NCOA3. Post-translationally, autocleaved. The resulting N-terminal Thr residue of the mature subunit is responsible for the nucleophile proteolytic activity. In terms of tissue distribution, detected in the cytoplasmic lobe of elongated spermatids, in residual bodies, and in the acrosomal cap of round spermatids.

The protein localises to the cytoplasm. Its subcellular location is the nucleus. It catalyses the reaction Cleavage of peptide bonds with very broad specificity.. In terms of biological role, the proteasome is a multicatalytic proteinase complex which is characterized by its ability to cleave peptides with Arg, Phe, Tyr, Leu, and Glu adjacent to the leaving group at neutral or slightly basic pH. The proteasome has an ATP-dependent proteolytic activity. This subunit is involved in antigen processing to generate class I binding peptides. The sequence is that of Proteasome subunit beta type-9 (Psmb9) from Rattus norvegicus (Rat).